The following is a 258-amino-acid chain: Thymidylate synthase (258 aa).

Position 21 (Arg-21) interacts with dUMP. His-51 contacts (6R)-5,10-methylene-5,6,7,8-tetrahydrofolate. 121-122 (RR) is a dUMP binding site. Cys-141 functions as the Nucleophile in the catalytic mechanism. DUMP is bound by residues 161 to 164 (RSAD), Asn-172, and 202 to 204 (HLY). Asp-164 lines the (6R)-5,10-methylene-5,6,7,8-tetrahydrofolate pocket. (6R)-5,10-methylene-5,6,7,8-tetrahydrofolate is bound at residue Ala-257.

The protein belongs to the thymidylate synthase family. Bacterial-type ThyA subfamily. Homodimer.

The protein resides in the cytoplasm. The catalysed reaction is dUMP + (6R)-5,10-methylene-5,6,7,8-tetrahydrofolate = 7,8-dihydrofolate + dTMP. It functions in the pathway pyrimidine metabolism; dTTP biosynthesis. Functionally, catalyzes the reductive methylation of 2'-deoxyuridine-5'-monophosphate (dUMP) to 2'-deoxythymidine-5'-monophosphate (dTMP) while utilizing 5,10-methylenetetrahydrofolate (mTHF) as the methyl donor and reductant in the reaction, yielding dihydrofolate (DHF) as a by-product. This enzymatic reaction provides an intracellular de novo source of dTMP, an essential precursor for DNA biosynthesis. The polypeptide is Thymidylate synthase (Dichelobacter nodosus (strain VCS1703A)).